Here is a 493-residue protein sequence, read N- to C-terminus: Catalase A (493 aa).

Residues 1-24 (MKRKLTGLFGAPVSDRENSMTAGP) form a disordered region. Active-site residues include H53 and N126. Position 336 (Y336) interacts with heme.

It belongs to the catalase family. Homodimer. Requires heme as cofactor.

It catalyses the reaction 2 H2O2 = O2 + 2 H2O. In terms of biological role, decomposes hydrogen peroxide into water and oxygen; serves to protect cells from the toxic effects of hydrogen peroxide. This chain is Catalase A (katA), found in Staphylococcus xylosus.